Consider the following 150-residue polypeptide: Ribosome maturation factor RimP (150 aa).

It belongs to the RimP family.

It localises to the cytoplasm. Its function is as follows. Required for maturation of 30S ribosomal subunits. The chain is Ribosome maturation factor RimP from Salmonella dublin (strain CT_02021853).